Reading from the N-terminus, the 477-residue chain is Aspartyl/glutamyl-tRNA(Asn/Gln) amidotransferase subunit B (477 aa).

This sequence belongs to the GatB/GatE family. GatB subfamily. As to quaternary structure, heterotrimer of A, B and C subunits.

The catalysed reaction is L-glutamyl-tRNA(Gln) + L-glutamine + ATP + H2O = L-glutaminyl-tRNA(Gln) + L-glutamate + ADP + phosphate + H(+). The enzyme catalyses L-aspartyl-tRNA(Asn) + L-glutamine + ATP + H2O = L-asparaginyl-tRNA(Asn) + L-glutamate + ADP + phosphate + 2 H(+). In terms of biological role, allows the formation of correctly charged Asn-tRNA(Asn) or Gln-tRNA(Gln) through the transamidation of misacylated Asp-tRNA(Asn) or Glu-tRNA(Gln) in organisms which lack either or both of asparaginyl-tRNA or glutaminyl-tRNA synthetases. The reaction takes place in the presence of glutamine and ATP through an activated phospho-Asp-tRNA(Asn) or phospho-Glu-tRNA(Gln). The protein is Aspartyl/glutamyl-tRNA(Asn/Gln) amidotransferase subunit B of Lactococcus lactis subsp. cremoris (strain MG1363).